The chain runs to 293 residues: Protease HtpX (293 aa).

2 helical membrane-spanning segments follow: residues 4-24 (IALF…VLSL) and 34-54 (GLMI…LLMS). His-139 provides a ligand contact to Zn(2+). Residue Glu-140 is part of the active site. His-143 is a Zn(2+) binding site. 2 helical membrane passes run 158 to 178 (VVNT…AGFM) and 193 to 213 (LIYF…ASII). Glu-222 contributes to the Zn(2+) binding site.

Belongs to the peptidase M48B family. Zn(2+) is required as a cofactor.

It is found in the cell inner membrane. The chain is Protease HtpX from Escherichia coli O127:H6 (strain E2348/69 / EPEC).